We begin with the raw amino-acid sequence, 131 residues long: Small ribosomal subunit protein uS12 (131 aa).

The segment at 1–32 (MPTFSQLVRKGRTAPRYKTASPALQGSPQRRG) is disordered. Asp89 bears the 3-methylthioaspartic acid mark. Residues 110 to 131 (RKQGRSKYGAKRAKGGAAAGKK) are disordered. The span at 111-131 (KQGRSKYGAKRAKGGAAAGKK) shows a compositional bias: basic residues.

It belongs to the universal ribosomal protein uS12 family. Part of the 30S ribosomal subunit. Contacts proteins S8 and S17. May interact with IF1 in the 30S initiation complex.

Its function is as follows. With S4 and S5 plays an important role in translational accuracy. In terms of biological role, interacts with and stabilizes bases of the 16S rRNA that are involved in tRNA selection in the A site and with the mRNA backbone. Located at the interface of the 30S and 50S subunits, it traverses the body of the 30S subunit contacting proteins on the other side and probably holding the rRNA structure together. The combined cluster of proteins S8, S12 and S17 appears to hold together the shoulder and platform of the 30S subunit. The polypeptide is Small ribosomal subunit protein uS12 (Acidobacterium capsulatum (strain ATCC 51196 / DSM 11244 / BCRC 80197 / JCM 7670 / NBRC 15755 / NCIMB 13165 / 161)).